The chain runs to 367 residues: Pantothenate kinase CAB1 (367 aa).

It belongs to the type II pantothenate kinase family.

The protein localises to the cytoplasm. Its subcellular location is the nucleus. The catalysed reaction is (R)-pantothenate + ATP = (R)-4'-phosphopantothenate + ADP + H(+). It functions in the pathway cofactor biosynthesis; coenzyme A biosynthesis; CoA from (R)-pantothenate: step 1/5. With respect to regulation, regulated by feedback inhibition by malonyl-CoA. In terms of biological role, plays a role in the physiological regulation of the intracellular CoA concentration. The polypeptide is Pantothenate kinase CAB1 (CAB1) (Saccharomyces cerevisiae (strain ATCC 204508 / S288c) (Baker's yeast)).